A 490-amino-acid chain; its full sequence is MSKLTDLTMAEARDGLAKGAFTAVELTDAHIKATEAQRHLNAFIVETPDLALEAAKASDARRQAGTAGSMDGLPIGIKDLFCTEGVQTTAASHILEGFKPPYESTVSGKLKAAGAISLGKLNLDEFAMGSSNQTSYFGAVENPWKKTSDPKAKLVPGGSSGGSAAAVAARMVLGATGTDTGGSIRQPAAFCGITGIKPTYGRCSRFGIVAFASSLDQAGPMARTVRDCAIMLGAMAGHDPKDSTSVNMAVPDFERALTGDIRGLKVGIPKEYRPDGLSDEVAKVWDRGIEWLKAAGATPVEISLPHTKYALATYYIIAPAECSSNLARYDGLRYGLRVPGKTLDDMYKKSRAAGFGAEVRRRILIGTYVLSAGYYDAYYAKAQKVRRLIAEDFRKAFETVDVILTPTAPSAAFGMGEGTDDPVTMWLNDVFTIPTSMAGLPGLSLPAGLSADGLPLGLQLIGRPFDEETVFRVAGVMETAANFTAKPEGV.

Residues Lys-78 and Ser-159 each act as charge relay system in the active site. Ser-183 serves as the catalytic Acyl-ester intermediate.

Belongs to the amidase family. GatA subfamily. As to quaternary structure, heterotrimer of A, B and C subunits.

It catalyses the reaction L-glutamyl-tRNA(Gln) + L-glutamine + ATP + H2O = L-glutaminyl-tRNA(Gln) + L-glutamate + ADP + phosphate + H(+). Its function is as follows. Allows the formation of correctly charged Gln-tRNA(Gln) through the transamidation of misacylated Glu-tRNA(Gln) in organisms which lack glutaminyl-tRNA synthetase. The reaction takes place in the presence of glutamine and ATP through an activated gamma-phospho-Glu-tRNA(Gln). In Paramagnetospirillum magneticum (strain ATCC 700264 / AMB-1) (Magnetospirillum magneticum), this protein is Glutamyl-tRNA(Gln) amidotransferase subunit A.